The primary structure comprises 624 residues: tRNA uridine 5-carboxymethylaminomethyl modification enzyme MnmG (624 aa).

Residues 13-18, V125, and S180 contribute to the FAD site; that span reads GGGHAG. Position 273–287 (273–287) interacts with NAD(+); sequence GPRYCPSIEDKIVRF. Q370 contributes to the FAD binding site.

This sequence belongs to the MnmG family. In terms of assembly, homodimer. Heterotetramer of two MnmE and two MnmG subunits. The cofactor is FAD.

Its subcellular location is the cytoplasm. Its function is as follows. NAD-binding protein involved in the addition of a carboxymethylaminomethyl (cmnm) group at the wobble position (U34) of certain tRNAs, forming tRNA-cmnm(5)s(2)U34. The polypeptide is tRNA uridine 5-carboxymethylaminomethyl modification enzyme MnmG (Legionella pneumophila (strain Lens)).